The sequence spans 147 residues: Ribonuclease 4 (147 aa).

The N-terminal stretch at 1 to 28 is a signal peptide; it reads MDIQRTQSLLLLLLLTLLGLGLVQPSYG. Q29 carries the pyrrolidone carboxylic acid modification. Residues R35, H40, K68, N71, and T72 each contribute to the dUMP site. Catalysis depends on H40, which acts as the Proton acceptor. Cystine bridges form between C53-C109, C67-C120, C85-C135, and C92-C99. The active-site Proton donor is H144. Residue F145 participates in dUMP binding.

This sequence belongs to the pancreatic ribonuclease family.

It is found in the secreted. Cleaves preferentially after uridine bases. Has antimicrobial activity against uropathogenic E.coli (UPEC). Probably contributes to urinary tract sterility. The protein is Ribonuclease 4 (Rnase4) of Rattus norvegicus (Rat).